Reading from the N-terminus, the 179-residue chain is ATP synthase subunit b (179 aa).

A helical membrane pass occupies residues 29–48 (VINLAILIGVLVYFGRGVLG).

Belongs to the ATPase B chain family. In terms of assembly, F-type ATPases have 2 components, F(1) - the catalytic core - and F(0) - the membrane proton channel. F(1) has five subunits: alpha(3), beta(3), gamma(1), delta(1), epsilon(1). F(0) has four main subunits: a(1), b(1), b'(1) and c(10-14). The alpha and beta chains form an alternating ring which encloses part of the gamma chain. F(1) is attached to F(0) by a central stalk formed by the gamma and epsilon chains, while a peripheral stalk is formed by the delta, b and b' chains.

It localises to the cellular thylakoid membrane. F(1)F(0) ATP synthase produces ATP from ADP in the presence of a proton or sodium gradient. F-type ATPases consist of two structural domains, F(1) containing the extramembraneous catalytic core and F(0) containing the membrane proton channel, linked together by a central stalk and a peripheral stalk. During catalysis, ATP synthesis in the catalytic domain of F(1) is coupled via a rotary mechanism of the central stalk subunits to proton translocation. Functionally, component of the F(0) channel, it forms part of the peripheral stalk, linking F(1) to F(0). Its function is as follows. The complex from the organism is particularly stable to disruption and remains functional after 6 hrs at 55 degrees Celsius. This Thermosynechococcus vestitus (strain NIES-2133 / IAM M-273 / BP-1) protein is ATP synthase subunit b.